A 580-amino-acid polypeptide reads, in one-letter code: Protein DSE1 (580 aa).

WD repeat units follow at residues Glu102–Gln141, Gln170–Lys209, Val222–Asn261, Ala333–His370, and Gly373–Gln412. A disordered region spans residues Val497–Glu534. A compositionally biased stretch (polar residues) spans Val510 to Phe526.

It belongs to the WD repeat DSE1 family.

In terms of biological role, involved in cell wall metabolism and required for the separation of the mother and daughter cells. The chain is Protein DSE1 (DSE1) from Kluyveromyces lactis (strain ATCC 8585 / CBS 2359 / DSM 70799 / NBRC 1267 / NRRL Y-1140 / WM37) (Yeast).